The primary structure comprises 187 residues: Probable GTP-binding protein EngB (187 aa).

Residues 18 to 187 (KNSEIAFWGR…KLKENINSNF (170 aa)) form the EngB-type G domain. Residues 26-33 (GRSNVGKS), 52-56 (GRTQL), 70-73 (DLPG), 137-140 (TKID), and 168-170 (VSS) contribute to the GTP site. Mg(2+) is bound by residues serine 33 and threonine 54.

This sequence belongs to the TRAFAC class TrmE-Era-EngA-EngB-Septin-like GTPase superfamily. EngB GTPase family. Mg(2+) serves as cofactor.

In terms of biological role, necessary for normal cell division and for the maintenance of normal septation. In Mycoplasmopsis synoviae (strain 53) (Mycoplasma synoviae), this protein is Probable GTP-binding protein EngB.